A 276-amino-acid polypeptide reads, in one-letter code: Undecaprenyl-diphosphatase 2 (276 aa).

Helical transmembrane passes span 3–23, 48–68, 92–112, 119–139, 196–216, 225–245, and 255–275; these read IWDI…EYAP, AANT…AFVF, LSIA…FLFE, LFSV…MLAA, ADFT…LSLI, DLLP…LFVV, and IKLV…FILF.

This sequence belongs to the UppP family.

It is found in the cell membrane. It catalyses the reaction di-trans,octa-cis-undecaprenyl diphosphate + H2O = di-trans,octa-cis-undecaprenyl phosphate + phosphate + H(+). Catalyzes the dephosphorylation of undecaprenyl diphosphate (UPP). Confers resistance to bacitracin. In Bacillus licheniformis (strain ATCC 14580 / DSM 13 / JCM 2505 / CCUG 7422 / NBRC 12200 / NCIMB 9375 / NCTC 10341 / NRRL NRS-1264 / Gibson 46), this protein is Undecaprenyl-diphosphatase 2.